We begin with the raw amino-acid sequence, 109 residues long: Aquaporin-2 (109 aa).

At 1–6 (SIAFSR) the chain is on the cytoplasmic side. The helical transmembrane segment at 7–27 (AVFSEFLATLLFVFFGLGSAL) threads the bilayer. The Extracellular segment spans residues 28-35 (NWPQALPS). Residues 36–54 (VLQIAMAFGLAIGTLVQTL) traverse the membrane as a helical segment. Residues 55-59 (GHISG) are Cytoplasmic-facing. An intramembrane region (discontinuously helical) is located at residues 60–69 (AHINPAVTVA). The short motif at 63 to 65 (NPA) is the NPA 1 element. The Cytoplasmic portion of the chain corresponds to 70-80 (CLVGCHVSFLR). The helical transmembrane segment at 81 to 102 (ATFYLAAQLLGAVAGAALLHEL) threads the bilayer. The Extracellular segment spans residues 103–109 (TPPDIRG).

This sequence belongs to the MIP/aquaporin (TC 1.A.8) family. In terms of assembly, homotetramer. Serine phosphorylation is necessary and sufficient for expression at the apical membrane. Endocytosis is not phosphorylation-dependent. Post-translationally, N-glycosylated.

The protein resides in the apical cell membrane. Its subcellular location is the basolateral cell membrane. It is found in the cell membrane. The protein localises to the cytoplasmic vesicle membrane. It localises to the golgi apparatus. The protein resides in the trans-Golgi network membrane. It carries out the reaction H2O(in) = H2O(out). The enzyme catalyses glycerol(in) = glycerol(out). In terms of biological role, forms a water-specific channel that provides the plasma membranes of renal collecting duct with high permeability to water, thereby permitting water to move in the direction of an osmotic gradient. Plays an essential role in renal water homeostasis. Could also be permeable to glycerol. The protein is Aquaporin-2 of Elephas maximus (Indian elephant).